We begin with the raw amino-acid sequence, 241 residues long: ATP phosphoribosyltransferase (241 aa).

It belongs to the ATP phosphoribosyltransferase family. Short subfamily. Heteromultimer composed of HisG and HisZ subunits.

Its subcellular location is the cytoplasm. It carries out the reaction 1-(5-phospho-beta-D-ribosyl)-ATP + diphosphate = 5-phospho-alpha-D-ribose 1-diphosphate + ATP. It functions in the pathway amino-acid biosynthesis; L-histidine biosynthesis; L-histidine from 5-phospho-alpha-D-ribose 1-diphosphate: step 1/9. Functionally, catalyzes the condensation of ATP and 5-phosphoribose 1-diphosphate to form N'-(5'-phosphoribosyl)-ATP (PR-ATP). Has a crucial role in the pathway because the rate of histidine biosynthesis seems to be controlled primarily by regulation of HisG enzymatic activity. This chain is ATP phosphoribosyltransferase, found in Gluconobacter oxydans (strain 621H) (Gluconobacter suboxydans).